A 456-amino-acid chain; its full sequence is MFS-type transporter ppzB (456 aa).

Helical transmembrane passes span 1–21 (MGLF…PFIM), 38–58 (GFLA…GWAA), 72–92 (VFLF…LLVV), 125–145 (IGTI…LGGV), and 154–174 (AVFA…GLVI). Residues 206–225 (EAQERTHEGTPLLPQDDDDD) are disordered. A run of 6 helical transmembrane segments spans residues 255–275 (LAML…ATVP), 284–304 (FSSL…FALG), 318–338 (AAAT…GLPE), 348–368 (VALF…VTSP), 398–418 (FGFS…LGGV), and 427–447 (VMGA…FLFV).

This sequence belongs to the major facilitator superfamily. TCR/Tet family.

It is found in the membrane. Functionally, MFS-type transporter; part of the gene cluster that mediates the biosynthesis of pyrrolopyrazines, secondary metabolites showing insecticidal activity. Probably involved in the secretion of peramine and other pyrrolopyrazines. This Metarhizium majus (strain ARSEF 297) protein is MFS-type transporter ppzB (ppzB).